Here is a 513-residue protein sequence, read N- to C-terminus: Putative GMP synthase [glutamine-hydrolyzing] (513 aa).

Residues 8–198 (MIVVLDFGGQ…AFAVCGCEGN (191 aa)) enclose the Glutamine amidotransferase type-1 domain. The Nucleophile role is filled by cysteine 85. Glutamate 174 is an active-site residue. Positions 199–388 (WSMENFIELE…LGIPDEVVWR (190 aa)) constitute a GMPS ATP-PPase domain. 226-232 (SGGVDSS) lines the ATP pocket.

As to quaternary structure, homodimer.

The catalysed reaction is XMP + L-glutamine + ATP + H2O = GMP + L-glutamate + AMP + diphosphate + 2 H(+). Its pathway is purine metabolism; GMP biosynthesis; GMP from XMP (L-Gln route): step 1/1. Its function is as follows. Catalyzes the synthesis of GMP from XMP. The chain is Putative GMP synthase [glutamine-hydrolyzing] (guaA) from Halalkalibacterium halodurans (strain ATCC BAA-125 / DSM 18197 / FERM 7344 / JCM 9153 / C-125) (Bacillus halodurans).